We begin with the raw amino-acid sequence, 283 residues long: MHCHAELRLSSPGQLKAARRRYKTFMIDEILSKETCDYFEKLSLYSVCPSLVVRPKPLHSCTGSPSLRAYPLLSVITRQPTVISHLVPTGSGLTPVLTRHPVAAAEAAAAAAETPGGEALASSESETEQPTPRQKKPRRSRTIFTELQLMGLEKKFQKQKYLSTPDRLDLAQSLGLTQLQVKTWYQNRRMKWKKMVLKGGQEAPTKPKGRPKKNSIPTSEEIEAEEKMNSQAQSQELLESSERQEEPCDTQEPKACLVPLEVAEPIHQPQELSEASSEPPPLS.

Disordered regions lie at residues 107–141 (AAAA…RRSR) and 198–283 (KGGQ…PPLS). Polar residues predominate over residues 122-132 (SSESETEQPTP). Positions 139–198 (RSRTIFTELQLMGLEKKFQKQKYLSTPDRLDLAQSLGLTQLQVKTWYQNRRMKWKKMVLK) form a DNA-binding region, homeobox. Residues 268–277 (QPQELSEASS) are compositionally biased toward low complexity.

The protein belongs to the BAR homeobox family. In terms of tissue distribution, nervous system, particularly in the telencephalon, spinal cord, and dorsal root ganglia.

It is found in the nucleus. Functionally, transcription factor. Binds optimally to the DNA consensus sequence 5'-YYTAATGRTTTTY-3'. May control the expression of neural adhesion molecules such as L1 or Ng-CAM during embryonic development of both the central and peripherical nervous system. May be involved in controlling adhesive processes in keratinizing epithelia. The chain is Homeobox protein BarH-like 2 (Barx2) from Mus musculus (Mouse).